A 557-amino-acid chain; its full sequence is Dihydroxy-acid dehydratase (557 aa).

Mg(2+) is bound at residue Asp-78. Position 119 (Cys-119) interacts with [2Fe-2S] cluster. 2 residues coordinate Mg(2+): Asp-120 and Lys-121. Lys-121 carries the N6-carboxylysine modification. [2Fe-2S] cluster is bound at residue Cys-192. Position 442 (Glu-442) interacts with Mg(2+). Ser-468 acts as the Proton acceptor in catalysis.

This sequence belongs to the IlvD/Edd family. Homodimer. [2Fe-2S] cluster serves as cofactor. Requires Mg(2+) as cofactor.

The catalysed reaction is (2R)-2,3-dihydroxy-3-methylbutanoate = 3-methyl-2-oxobutanoate + H2O. It catalyses the reaction (2R,3R)-2,3-dihydroxy-3-methylpentanoate = (S)-3-methyl-2-oxopentanoate + H2O. The protein operates within amino-acid biosynthesis; L-isoleucine biosynthesis; L-isoleucine from 2-oxobutanoate: step 3/4. It functions in the pathway amino-acid biosynthesis; L-valine biosynthesis; L-valine from pyruvate: step 3/4. Its function is as follows. Functions in the biosynthesis of branched-chain amino acids. Catalyzes the dehydration of (2R,3R)-2,3-dihydroxy-3-methylpentanoate (2,3-dihydroxy-3-methylvalerate) into 2-oxo-3-methylpentanoate (2-oxo-3-methylvalerate) and of (2R)-2,3-dihydroxy-3-methylbutanoate (2,3-dihydroxyisovalerate) into 2-oxo-3-methylbutanoate (2-oxoisovalerate), the penultimate precursor to L-isoleucine and L-valine, respectively. The protein is Dihydroxy-acid dehydratase of Bacillus cereus (strain AH187).